The sequence spans 398 residues: Phosphoglycerate kinase (398 aa).

Residues 23–25, Arg-38, 61–64, Arg-122, and Arg-155 contribute to the substrate site; these read DFN and HMGK. ATP contacts are provided by residues Lys-206, Gly-297, Glu-328, and 354 to 357; that span reads GGDS.

This sequence belongs to the phosphoglycerate kinase family. Monomer.

The protein localises to the cytoplasm. It carries out the reaction (2R)-3-phosphoglycerate + ATP = (2R)-3-phospho-glyceroyl phosphate + ADP. It participates in carbohydrate degradation; glycolysis; pyruvate from D-glyceraldehyde 3-phosphate: step 2/5. This is Phosphoglycerate kinase from Clostridium botulinum (strain Loch Maree / Type A3).